The following is a 347-amino-acid chain: Anthranilate phosphoribosyltransferase (347 aa).

5-phospho-alpha-D-ribose 1-diphosphate contacts are provided by residues Gly88, 91 to 92 (GD), Thr96, 98 to 101 (NIST), 116 to 124 (KHGNRSVSS), and Ser128. Gly88 contacts anthranilate. Ser100 is a binding site for Mg(2+). An anthranilate-binding site is contributed by Asn119. Anthranilate is bound at residue Arg174. Residues Asp232 and Glu233 each coordinate Mg(2+).

The protein belongs to the anthranilate phosphoribosyltransferase family. Homodimer. Mg(2+) is required as a cofactor.

The enzyme catalyses N-(5-phospho-beta-D-ribosyl)anthranilate + diphosphate = 5-phospho-alpha-D-ribose 1-diphosphate + anthranilate. The protein operates within amino-acid biosynthesis; L-tryptophan biosynthesis; L-tryptophan from chorismate: step 2/5. Its function is as follows. Catalyzes the transfer of the phosphoribosyl group of 5-phosphorylribose-1-pyrophosphate (PRPP) to anthranilate to yield N-(5'-phosphoribosyl)-anthranilate (PRA). This Shewanella sp. (strain MR-7) protein is Anthranilate phosphoribosyltransferase.